Here is a 479-residue protein sequence, read N- to C-terminus: Ribosomal RNA small subunit methyltransferase F (479 aa).

Residues 125–131 (AAAPGSK), Glu-149, Asp-176, and Asp-194 contribute to the S-adenosyl-L-methionine site. The active-site Nucleophile is the Cys-247.

The protein belongs to the class I-like SAM-binding methyltransferase superfamily. RsmB/NOP family.

The protein localises to the cytoplasm. It catalyses the reaction cytidine(1407) in 16S rRNA + S-adenosyl-L-methionine = 5-methylcytidine(1407) in 16S rRNA + S-adenosyl-L-homocysteine + H(+). Specifically methylates the cytosine at position 1407 (m5C1407) of 16S rRNA. This Salmonella paratyphi B (strain ATCC BAA-1250 / SPB7) protein is Ribosomal RNA small subunit methyltransferase F.